The sequence spans 500 residues: Probable trehalose-phosphate phosphatase 8 (500 aa).

This sequence belongs to the trehalose phosphatase family. A divalent metal cation is required as a cofactor.

It catalyses the reaction alpha,alpha-trehalose 6-phosphate + H2O = alpha,alpha-trehalose + phosphate. It functions in the pathway glycan biosynthesis; trehalose biosynthesis. Removes the phosphate from trehalose 6-phosphate to produce free trehalose. Trehalose accumulation in plant may improve abiotic stress tolerance. The sequence is that of Probable trehalose-phosphate phosphatase 8 (TPP8) from Oryza sativa subsp. japonica (Rice).